The following is a 409-amino-acid chain: Phosphoglycerate kinase (409 aa).

Substrate-binding positions include 22–24, Arg37, 60–63, Arg122, and Arg164; these read DLN and HLSR. Residues Lys215, Glu338, and 365–368 contribute to the ATP site; that span reads GGDS.

The protein belongs to the phosphoglycerate kinase family. Monomer.

Its subcellular location is the cytoplasm. It catalyses the reaction (2R)-3-phosphoglycerate + ATP = (2R)-3-phospho-glyceroyl phosphate + ADP. Its pathway is carbohydrate degradation; glycolysis; pyruvate from D-glyceraldehyde 3-phosphate: step 2/5. This chain is Phosphoglycerate kinase (pgk), found in Mycoplasma pneumoniae (strain ATCC 29342 / M129 / Subtype 1) (Mycoplasmoides pneumoniae).